A 249-amino-acid polypeptide reads, in one-letter code: Triosephosphate isomerase (249 aa).

Residue 9–11 (NWK) participates in substrate binding. His95 acts as the Electrophile in catalysis. Catalysis depends on Glu167, which acts as the Proton acceptor. Substrate contacts are provided by residues Gly173, Ser213, and 234 to 235 (GG).

Belongs to the triosephosphate isomerase family. As to quaternary structure, homodimer.

It is found in the cytoplasm. The enzyme catalyses D-glyceraldehyde 3-phosphate = dihydroxyacetone phosphate. Its pathway is carbohydrate biosynthesis; gluconeogenesis. It functions in the pathway carbohydrate degradation; glycolysis; D-glyceraldehyde 3-phosphate from glycerone phosphate: step 1/1. Functionally, involved in the gluconeogenesis. Catalyzes stereospecifically the conversion of dihydroxyacetone phosphate (DHAP) to D-glyceraldehyde-3-phosphate (G3P). This Solibacter usitatus (strain Ellin6076) protein is Triosephosphate isomerase.